The chain runs to 76 residues: Small ribosomal subunit protein bS18 (76 aa).

This sequence belongs to the bacterial ribosomal protein bS18 family. Part of the 30S ribosomal subunit. Forms a tight heterodimer with protein bS6.

Functionally, binds as a heterodimer with protein bS6 to the central domain of the 16S rRNA, where it helps stabilize the platform of the 30S subunit. In Tolumonas auensis (strain DSM 9187 / NBRC 110442 / TA 4), this protein is Small ribosomal subunit protein bS18.